The sequence spans 376 residues: Cytoplasmic tRNA 2-thiolation protein 2 (376 aa).

The protein belongs to the CTU2/NCS2 family.

It localises to the cytoplasm. It functions in the pathway tRNA modification; 5-methoxycarbonylmethyl-2-thiouridine-tRNA biosynthesis. In terms of biological role, plays a central role in 2-thiolation of mcm(5)S(2)U at tRNA wobble positions of tRNA(Lys), tRNA(Glu) and tRNA(Gln). May act by forming a heterodimer with NCS6 that ligates sulfur from thiocarboxylated URM1 onto the uridine of tRNAs at wobble position. Prior mcm(5) tRNA modification by the elongator complex is required for 2-thiolation. May also be involved in protein urmylation. This is Cytoplasmic tRNA 2-thiolation protein 2 from Coccidioides immitis (strain RS) (Valley fever fungus).